The chain runs to 251 residues: Probable transcriptional regulatory protein NFA_37020 (251 aa).

Belongs to the TACO1 family.

The protein resides in the cytoplasm. The sequence is that of Probable transcriptional regulatory protein NFA_37020 from Nocardia farcinica (strain IFM 10152).